Reading from the N-terminus, the 1412-residue chain is DNA-directed RNA polymerase subunit beta'' (1412 aa).

Zn(2+)-binding residues include cysteine 220, cysteine 294, cysteine 301, and cysteine 304.

Belongs to the RNA polymerase beta' chain family. RpoC2 subfamily. In terms of assembly, in plastids the minimal PEP RNA polymerase catalytic core is composed of four subunits: alpha, beta, beta', and beta''. When a (nuclear-encoded) sigma factor is associated with the core the holoenzyme is formed, which can initiate transcription. The cofactor is Zn(2+).

The protein resides in the plastid. The protein localises to the chloroplast. It catalyses the reaction RNA(n) + a ribonucleoside 5'-triphosphate = RNA(n+1) + diphosphate. Its function is as follows. DNA-dependent RNA polymerase catalyzes the transcription of DNA into RNA using the four ribonucleoside triphosphates as substrates. The chain is DNA-directed RNA polymerase subunit beta'' from Chara vulgaris (Common stonewort).